A 360-amino-acid chain; its full sequence is DNA replication and repair protein RecF (360 aa).

Residue 33–40 coordinates ATP; sequence GENGSGKT.

The protein belongs to the RecF family.

Its subcellular location is the cytoplasm. In terms of biological role, the RecF protein is involved in DNA metabolism; it is required for DNA replication and normal SOS inducibility. RecF binds preferentially to single-stranded, linear DNA. It also seems to bind ATP. This is DNA replication and repair protein RecF from Rickettsia typhi (strain ATCC VR-144 / Wilmington).